The following is a 79-amino-acid chain: UPF0180 protein Bcer98_1118 (79 aa).

This sequence belongs to the UPF0180 family.

The sequence is that of UPF0180 protein Bcer98_1118 from Bacillus cytotoxicus (strain DSM 22905 / CIP 110041 / 391-98 / NVH 391-98).